The sequence spans 621 residues: Alpha-actinin-like protein 1 (621 aa).

Calponin-homology (CH) domains follow at residues 8 to 114 (SVQN…LRFT) and 123 to 230 (LTAK…HAFS). The interval 86–110 (LTNIGPADIVDGNLKLILGLIWTLI) is actin-binding. EF-hand domains follow at residues 388–419 (LSTI…LGPL), 487–549 (DGIT…EIVM), and 550–618 (EELE…AEDK).

It belongs to the alpha-actinin family.

It is found in the cytoplasm. The protein resides in the cytoskeleton. Its function is as follows. Binds to actin and is involved in actin-ring formation and organization. Plays a role in cytokinesis and is involved in septation. This chain is Alpha-actinin-like protein 1 (ain1), found in Schizosaccharomyces pombe (strain 972 / ATCC 24843) (Fission yeast).